We begin with the raw amino-acid sequence, 253 residues long: Negative modulator of initiation of replication (253 aa).

Residues 66 to 112 (SNQEQQTGHGHAGEPSAVQTPESNDYAKAQPHSSGYQPGQLEGHKSE) form a disordered region. The segment at 154-155 (AV) is interaction with DNA.

This sequence belongs to the SeqA family. Homodimer. Polymerizes to form helical filaments.

Its subcellular location is the cytoplasm. Functionally, negative regulator of replication initiation, which contributes to regulation of DNA replication and ensures that replication initiation occurs exactly once per chromosome per cell cycle. Binds to pairs of hemimethylated GATC sequences in the oriC region, thus preventing assembly of replication proteins and re-initiation at newly replicated origins. Repression is relieved when the region becomes fully methylated. The polypeptide is Negative modulator of initiation of replication (Shewanella denitrificans (strain OS217 / ATCC BAA-1090 / DSM 15013)).